A 171-amino-acid polypeptide reads, in one-letter code: tRNA-specific adenosine deaminase (171 aa).

Residues 6-133 form the CMP/dCMP-type deaminase domain; that stretch reads EEQTYFMQEA…ERLNHRVQVE (128 aa). H57 lines the Zn(2+) pocket. The active-site Proton donor is the E59. Zn(2+) contacts are provided by C87 and C90.

Belongs to the cytidine and deoxycytidylate deaminase family. As to quaternary structure, homodimer. Zn(2+) serves as cofactor.

The catalysed reaction is adenosine(34) in tRNA + H2O + H(+) = inosine(34) in tRNA + NH4(+). Functionally, catalyzes the deamination of adenosine to inosine at the wobble position 34 of tRNA(Arg2). In Streptococcus pyogenes serotype M1, this protein is tRNA-specific adenosine deaminase.